Here is a 929-residue protein sequence, read N- to C-terminus: Ras guanine nucleotide exchange factor M (929 aa).

The segment covering 1–15 (MWQKPSLTKSMMNEV) has biased composition (polar residues). Disordered stretches follow at residues 1–102 (MWQK…AAGS) and 169–316 (TNNN…SKSL). The span at 16 to 33 (SSNSPKSPTLTSSPSTQS) shows a compositional bias: low complexity. The segment covering 44-67 (LDGGGGGSNRLIFGGSGGGSGGGS) has biased composition (gly residues). Composition is skewed to low complexity over residues 68 to 80 (LPSS…VNPF) and 169 to 191 (TNNN…NNDG). The segment covering 192–202 (SGSGSGAGGSF) has biased composition (gly residues). Over residues 203-246 (IGTTTSAKTTSTTSTSAATTTTTTTTSSSSSSPSSSSPSSTSPT) the composition is skewed to low complexity. Over residues 247–256 (IASNNDNNNK) the composition is skewed to polar residues. The segment covering 270-287 (PPLTLSQSQTQQQQQQKV) has biased composition (low complexity). Over residues 295 to 305 (RFSTNSSGSQS) the composition is skewed to polar residues. Positions 390–528 (NKFVVVSGPK…PILDLYEKLK (139 aa)) constitute an N-terminal Ras-GEF domain. The interval 540-583 (SLSGSGGISNNNNGSDLKNSNNGNNSSNNNNSSSNSSSSSSSSD) is disordered. In terms of domain architecture, Ras-GEF spans 676 to 911 (SPQDIAKQLT…YAFSKFIESP (236 aa)).

Functionally, promotes the exchange of Ras-bound GDP by GTP. The chain is Ras guanine nucleotide exchange factor M (gefM) from Dictyostelium discoideum (Social amoeba).